We begin with the raw amino-acid sequence, 697 residues long: Elongation factor G 2 (697 aa).

The tr-type G domain occupies 5–280; the sequence is SKYRNIGIFA…AVVDYLPDPV (276 aa). GTP-binding positions include 14 to 21, 78 to 82, and 132 to 135; these read AHVDAGKT, DTPGH, and NKLD.

It belongs to the TRAFAC class translation factor GTPase superfamily. Classic translation factor GTPase family. EF-G/EF-2 subfamily.

It localises to the cytoplasm. In terms of biological role, catalyzes the GTP-dependent ribosomal translocation step during translation elongation. During this step, the ribosome changes from the pre-translocational (PRE) to the post-translocational (POST) state as the newly formed A-site-bound peptidyl-tRNA and P-site-bound deacylated tRNA move to the P and E sites, respectively. Catalyzes the coordinated movement of the two tRNA molecules, the mRNA and conformational changes in the ribosome. In Shewanella frigidimarina (strain NCIMB 400), this protein is Elongation factor G 2.